The primary structure comprises 187 residues: KS71A fimbrillin (187 aa).

The N-terminal stretch at 1–21 (MIKSVIAGAVAMAVVSFGANA) is a signal peptide. An intrachain disulfide couples cysteine 43 to cysteine 82.

The protein belongs to the fimbrial protein family.

It is found in the fimbrium. Its function is as follows. Fimbriae (also called pili), polar filaments radiating from the surface of the bacterium to a length of 0.5-1.5 micrometers and numbering 100-300 per cell, enable bacteria to colonize the epithelium of specific host organs. In Escherichia coli, this protein is KS71A fimbrillin (KS71A).